A 108-amino-acid polypeptide reads, in one-letter code: Large ribosomal subunit protein uL23 (108 aa).

The protein belongs to the universal ribosomal protein uL23 family. In terms of assembly, part of the 50S ribosomal subunit. Contacts protein L29, and trigger factor when it is bound to the ribosome.

Functionally, one of the early assembly proteins it binds 23S rRNA. One of the proteins that surrounds the polypeptide exit tunnel on the outside of the ribosome. Forms the main docking site for trigger factor binding to the ribosome. This chain is Large ribosomal subunit protein uL23, found in Polaromonas naphthalenivorans (strain CJ2).